The sequence spans 144 residues: Hemoglobin embryonic subunit alpha (144 aa).

The 142-residue stretch at 3 to 144 folds into the Globin domain; the sequence is SLSAKDKDVV…LALALAEKYR (142 aa). His-61 provides a ligand contact to O2. Residue His-90 coordinates heme b.

The protein belongs to the globin family. In terms of assembly, heterotetramer of two alpha chains and two beta chains. As to expression, red blood cells.

Functionally, involved in oxygen transport from gills to the various peripheral tissues. This Oryzias latipes (Japanese rice fish) protein is Hemoglobin embryonic subunit alpha.